The following is a 417-amino-acid chain: D-galactonate dehydratase family member SeV_A0456 (417 aa).

Substrate contacts are provided by Q43 and H127. The active-site Proton donor/acceptor is the Y158. D223 is a binding site for Mg(2+). The Proton donor/acceptor role is filled by H225. Residues E249 and E275 each contribute to the Mg(2+) site. E275, R296, H325, D329, and E352 together coordinate substrate.

This sequence belongs to the mandelate racemase/muconate lactonizing enzyme family. GalD subfamily. Mg(2+) is required as a cofactor.

It carries out the reaction D-gluconate = 2-dehydro-3-deoxy-D-gluconate + H2O. Its function is as follows. Has low D-gluconate dehydratase activity (in vitro), suggesting that it has no significant role in D-gluconate degradation in vivo. Has no detectable activity with a panel of 70 other acid sugars (in vitro). The chain is D-galactonate dehydratase family member SeV_A0456 from Salmonella virchow (strain SL491).